The chain runs to 132 residues: ATP synthase epsilon chain (132 aa).

The protein belongs to the ATPase epsilon chain family. F-type ATPases have 2 components, CF(1) - the catalytic core - and CF(0) - the membrane proton channel. CF(1) has five subunits: alpha(3), beta(3), gamma(1), delta(1), epsilon(1). CF(0) has three main subunits: a, b and c.

Its subcellular location is the cell membrane. Produces ATP from ADP in the presence of a proton gradient across the membrane. In Brevibacillus brevis (strain 47 / JCM 6285 / NBRC 100599), this protein is ATP synthase epsilon chain.